The following is a 205-amino-acid chain: Small ribosomal subunit protein uS4 (205 aa).

The segment at Asn-18–Gly-49 is disordered. Residues Arg-94–Asn-157 enclose the S4 RNA-binding domain.

Belongs to the universal ribosomal protein uS4 family. As to quaternary structure, part of the 30S ribosomal subunit. Contacts protein S5. The interaction surface between S4 and S5 is involved in control of translational fidelity.

One of the primary rRNA binding proteins, it binds directly to 16S rRNA where it nucleates assembly of the body of the 30S subunit. In terms of biological role, with S5 and S12 plays an important role in translational accuracy. This chain is Small ribosomal subunit protein uS4, found in Nitrobacter hamburgensis (strain DSM 10229 / NCIMB 13809 / X14).